Consider the following 680-residue polypeptide: Serine/threonine-protein kinase YPK1 (680 aa).

The segment covering 1-11 (MYSWKSKFKFG) has biased composition (basic residues). A disordered region spans residues 1-117 (MYSWKSKFKF…GTPNDATSSS (117 aa)). Basic and acidic residues-rich tracts occupy residues 12–21 (KSKEEKEAKH) and 41–56 (GEHDASITRSSLDRKG). T57 carries the phosphothreonine modification. Residues 59 to 71 (NPSNSSVVPVRVS) are compositionally biased toward low complexity. Residues S61, S64, and S71 each carry the phosphoserine modification. The span at 73 to 83 (DASSSTSTVRD) shows a compositional bias: polar residues. The span at 84 to 97 (SNGGNSENTNSSQN) shows a compositional bias: low complexity. Over residues 98 to 117 (LDETANIGSTGTPNDATSSS) the composition is skewed to polar residues. At S170 the chain carries Phosphoserine. The region spanning 347–602 (FDLLKVIGKG…ADEIRNHPFF (256 aa)) is the Protein kinase domain. ATP-binding positions include 353–361 (IGKGSFGKV) and K376. The active-site Proton acceptor is the D470. The residue at position 502 (T502) is a Phosphothreonine. T504 is subject to Phosphothreonine; by PKH1. The region spanning 603 to 673 (SQLSWKRLLM…VGNEQLGSSM (71 aa)) is the AGC-kinase C-terminal domain. S644 and S653 each carry phosphoserine. Residue T662 is modified to Phosphothreonine; by PKH1. At S671 the chain carries Phosphoserine.

This sequence belongs to the protein kinase superfamily. AGC Ser/Thr protein kinase family. RAC subfamily. Post-translationally, autophosphorylated. Phytosphingosine level stimulates phosphorylation by PKH1. The N-terminal half is phosphorylated by FPK1. Phosphorylation is inhibited by exogenous addition of phytosphingosine.

It localises to the cytoplasm. The protein localises to the cell membrane. It catalyses the reaction L-seryl-[protein] + ATP = O-phospho-L-seryl-[protein] + ADP + H(+). The enzyme catalyses L-threonyl-[protein] + ATP = O-phospho-L-threonyl-[protein] + ADP + H(+). Activated by phytosphingosine (PHS), a sphingoid long chain base. Activated by PKH1 phosphorylation. Plays an essential role in the proliferation of yeast cells. Involved in a signaling pathway, required for optimal cell wall integrity, that acts in parallel with the PKC1-SLT2-dependent pathway. Downstream kinase in the sphingolipid-mediated signaling pathway. Phosphorylation is regulated by the intracellular sphingolipid concentration. Disruption or inhibition of sphingolipid synthesis leads to the activation and phosphorylation of YPK1 through the TORC2 and PKH1 pathways, which in turn phosphorylates ORM1 and LAG1 to activate sphingolipid synthesis. Cooperates with SLI1 in mediating resistance to the sphingolipid biosynthesis inhibitor drug myriocin (ISP-1); kinase activity is essential for the resistance. Required for both receptor-mediated and fluid-phase endocytosis, but is not necessary for receptor phosphorylation or ubiquitination. Necessary for the internalization of plasma membrane proteins carrying different types of internalization signals. Acts downstream of the PKH kinases to control endocytosis by phosphorylating components of the endocytic machinery. Phosphorylation of residue Thr-504 in the activation loop and residue Thr-662 are essential for activity. Phosphorylates and down-regulates flippase activator FPK1. This Saccharomyces cerevisiae (strain ATCC 204508 / S288c) (Baker's yeast) protein is Serine/threonine-protein kinase YPK1 (YPK1).